The primary structure comprises 193 residues: Holliday junction branch migration complex subunit RuvA (193 aa).

Positions M1 to A63 are domain I. Positions E64 to V142 are domain II. Positions S143–S145 are flexible linker. Positions S145–L193 are domain III.

It belongs to the RuvA family. Homotetramer. Forms an RuvA(8)-RuvB(12)-Holliday junction (HJ) complex. HJ DNA is sandwiched between 2 RuvA tetramers; dsDNA enters through RuvA and exits via RuvB. An RuvB hexamer assembles on each DNA strand where it exits the tetramer. Each RuvB hexamer is contacted by two RuvA subunits (via domain III) on 2 adjacent RuvB subunits; this complex drives branch migration. In the full resolvosome a probable DNA-RuvA(4)-RuvB(12)-RuvC(2) complex forms which resolves the HJ.

It is found in the cytoplasm. Its function is as follows. The RuvA-RuvB-RuvC complex processes Holliday junction (HJ) DNA during genetic recombination and DNA repair, while the RuvA-RuvB complex plays an important role in the rescue of blocked DNA replication forks via replication fork reversal (RFR). RuvA specifically binds to HJ cruciform DNA, conferring on it an open structure. The RuvB hexamer acts as an ATP-dependent pump, pulling dsDNA into and through the RuvAB complex. HJ branch migration allows RuvC to scan DNA until it finds its consensus sequence, where it cleaves and resolves the cruciform DNA. The polypeptide is Holliday junction branch migration complex subunit RuvA (Christiangramia forsetii (strain DSM 17595 / CGMCC 1.15422 / KT0803) (Gramella forsetii)).